We begin with the raw amino-acid sequence, 600 residues long: Gamma-terpinene synthase, chloroplastic (600 aa).

A chloroplast-targeting transit peptide spans 1-40; that stretch reads MALNLLSSLPAACNFTRLSLPLSSKVNGFVPPITQVQYPM. Positions 353, 357, 498, and 506 each coordinate Mg(2+). A DDXXD motif motif is present at residues 353 to 357; the sequence is DDVYD.

It belongs to the terpene synthase family. The cofactor is Mn(2+). Requires Mg(2+) as cofactor.

The protein localises to the plastid. The protein resides in the chloroplast. It carries out the reaction (2E)-geranyl diphosphate = gamma-terpinene + diphosphate. Its pathway is secondary metabolite biosynthesis; terpenoid biosynthesis. Inhibited by 100 mM KCl. In terms of biological role, monoterpene synthase which catalyzes the conversion of geranyl diphosphate to gamma-terpinene and the minor products limonene, alpha-pinene, beta-pinene, alpha-terpinolene, alpha-thujene, alpha-terpinene, myrcene and sabinene. The polypeptide is Gamma-terpinene synthase, chloroplastic (Citrus limon (Lemon)).